Consider the following 816-residue polypeptide: tRNA(Met) cytidine acetyltransferase TmcA (816 aa).

2 residues coordinate ATP: Q265 and R439. Residues 469 to 664 form the N-acetyltransferase domain; that stretch reads ELIRKMEVYL…YTAIVIKPIS (196 aa). Acetyl-CoA contacts are provided by residues 589–591, E629, and R636; that span reads IAT.

This sequence belongs to the TmcA family.

Its subcellular location is the cytoplasm. It carries out the reaction cytidine(34) in elongator tRNA(Met) + acetyl-CoA + ATP + H2O = N(4)-acetylcytidine(34) in elongator tRNA(Met) + ADP + phosphate + CoA + H(+). The catalysed reaction is a cytidine in RNA + acetyl-CoA + ATP + H2O = an N(4)-acetylcytidine in RNA + ADP + phosphate + CoA + H(+). The enzyme catalyses a cytidine in tRNA + acetyl-CoA + ATP + H2O = an N(4)-acetylcytidine in tRNA + ADP + phosphate + CoA + H(+). It catalyses the reaction a cytidine in mRNA + acetyl-CoA + ATP + H2O = an N(4)-acetylcytidine in mRNA + ADP + phosphate + CoA + H(+). Functionally, catalyzes the formation of N(4)-acetylcytidine (ac(4)C) at the wobble position of tRNA(Met), by using acetyl-CoA as an acetyl donor and ATP (or GTP). Catalyzes the formation of 233 N(4)-acetylcytidine (ac(4)C) sites in RNA, on the middle C of a CCG motif. Modifications are found in rRNA, ncRNA, mRNA and tRNA. More acetylation is observed at 85 than at 65 or 75 degrees Celsius. This is tRNA(Met) cytidine acetyltransferase TmcA from Pyrococcus furiosus (strain ATCC 43587 / DSM 3638 / JCM 8422 / Vc1).